We begin with the raw amino-acid sequence, 101 residues long: ATP synthase subunit c (101 aa).

2 helical membrane-spanning segments follow: residues 31 to 51 (AFAY…GAGQ) and 81 to 101 (AISE…IFVG).

The protein belongs to the ATPase C chain family. F-type ATPases have 2 components, F(1) - the catalytic core - and F(0) - the membrane proton channel. F(1) has five subunits: alpha(3), beta(3), gamma(1), delta(1), epsilon(1). F(0) has three main subunits: a(1), b(2) and c(10-14). The alpha and beta chains form an alternating ring which encloses part of the gamma chain. F(1) is attached to F(0) by a central stalk formed by the gamma and epsilon chains, while a peripheral stalk is formed by the delta and b chains.

It localises to the cell membrane. F(1)F(0) ATP synthase produces ATP from ADP in the presence of a proton or sodium gradient. F-type ATPases consist of two structural domains, F(1) containing the extramembraneous catalytic core and F(0) containing the membrane proton channel, linked together by a central stalk and a peripheral stalk. During catalysis, ATP synthesis in the catalytic domain of F(1) is coupled via a rotary mechanism of the central stalk subunits to proton translocation. Its function is as follows. Key component of the F(0) channel; it plays a direct role in translocation across the membrane. A homomeric c-ring of between 10-14 subunits forms the central stalk rotor element with the F(1) delta and epsilon subunits. The protein is ATP synthase subunit c of Mesomycoplasma hyopneumoniae (strain 7448) (Mycoplasma hyopneumoniae).